Here is a 190-residue protein sequence, read N- to C-terminus: MAQNGSEAGPLVAGVAGRYASALFELARDERQVDAVAESLNQFDGLLKESADLRRLVRSPVFSAEEQEAAIGAVLDKAGIGGLAGNFIRLAASNRRLFALPDMIDAFRALVQDSKGIVRAQVRVAERPSDAVIEEIKASLRDIAKADVDVDLVVDPSLIGGLVVKMGSRMVDASLKTKLNGIRLAMRAAR.

It belongs to the ATPase delta chain family. As to quaternary structure, F-type ATPases have 2 components, F(1) - the catalytic core - and F(0) - the membrane proton channel. F(1) has five subunits: alpha(3), beta(3), gamma(1), delta(1), epsilon(1). F(0) has three main subunits: a(1), b(2) and c(10-14). The alpha and beta chains form an alternating ring which encloses part of the gamma chain. F(1) is attached to F(0) by a central stalk formed by the gamma and epsilon chains, while a peripheral stalk is formed by the delta and b chains.

Its subcellular location is the cell inner membrane. F(1)F(0) ATP synthase produces ATP from ADP in the presence of a proton or sodium gradient. F-type ATPases consist of two structural domains, F(1) containing the extramembraneous catalytic core and F(0) containing the membrane proton channel, linked together by a central stalk and a peripheral stalk. During catalysis, ATP synthesis in the catalytic domain of F(1) is coupled via a rotary mechanism of the central stalk subunits to proton translocation. Functionally, this protein is part of the stalk that links CF(0) to CF(1). It either transmits conformational changes from CF(0) to CF(1) or is implicated in proton conduction. The polypeptide is ATP synthase subunit delta (Methylobacterium radiotolerans (strain ATCC 27329 / DSM 1819 / JCM 2831 / NBRC 15690 / NCIMB 10815 / 0-1)).